The following is a 338-amino-acid chain: Malate dehydrogenase, mitochondrial (338 aa).

The transit peptide at 1–24 (MLSALARPASAALRRSFSTSAQNN) directs the protein to the mitochondrion. NAD(+)-binding positions include 31–37 (GASGGIG) and D57. S33 carries O-linked (GlcNAc) serine glycosylation. An N6-acetyllysine; alternate mark is found at K78 and K91. An N6-succinyllysine; alternate mark is found at K78 and K91. Substrate contacts are provided by R104 and R110. NAD(+) is bound by residues N117 and 140–142 (IAN). Substrate is bound at residue N142. K165 is modified (N6-acetyllysine). Residue R176 coordinates substrate. N6-acetyllysine; alternate is present on K185. K185 bears the N6-succinyllysine; alternate mark. H200 serves as the catalytic Proton acceptor. K203 bears the N6-succinyllysine mark. An N6-acetyllysine; alternate mark is found at K215 and K239. N6-succinyllysine; alternate is present on residues K215 and K239. Position 239 is an N6-malonyllysine; alternate (K239). S246 carries the post-translational modification Phosphoserine. M251 is a binding site for NAD(+). N6-succinyllysine is present on K269. N6-acetyllysine; alternate occurs at positions 296, 301, 314, and 324. An N6-succinyllysine; alternate mark is found at K296, K301, K314, and K324. Phosphoserine is present on S326. N6-acetyllysine; alternate occurs at positions 328, 329, and 335. K328 carries the post-translational modification N6-succinyllysine; alternate. N6-malonyllysine; alternate is present on K329. An N6-succinyllysine; alternate modification is found at K335.

Belongs to the LDH/MDH superfamily. MDH type 1 family. As to quaternary structure, homodimer. Post-translationally, acetylation is enhanced after treatment either with trichostin A (TCA) or with nicotinamide (NAM) with the appearance of tri- and tetraacetylations. Glucose also increases acetylation.

It is found in the mitochondrion matrix. It catalyses the reaction (S)-malate + NAD(+) = oxaloacetate + NADH + H(+). Its activity is regulated as follows. Enzyme activity is enhanced by acetylation. The chain is Malate dehydrogenase, mitochondrial (MDH2) from Macaca fascicularis (Crab-eating macaque).